We begin with the raw amino-acid sequence, 908 residues long: SKI/DACH domain-containing protein 1 (908 aa).

Positions 337–353 are enriched in basic residues; the sequence is HHHHHHHHHHHHHHHRA. Residues 337–461 are disordered; sequence HHHHHHHHHH…SSSGSSQVSV (125 aa). Composition is skewed to low complexity over residues 370–389 and 396–410; these read PHLGSFPESCSSDSESSSYS and SDFGSSLSSSSNSVS. A compositionally biased stretch (acidic residues) spans 411 to 429; that stretch reads SEEEEEEGEEEEEEEEEEG. Residues 449–461 are compositionally biased toward low complexity; that stretch reads ESDSSSGSSQVSV. A Glycyl lysine isopeptide (Lys-Gly) (interchain with G-Cter in SUMO2) cross-link involves residue Lys688. Disordered regions lie at residues 744–763 and 792–818; these read ETPSLNPLAQSQGLSCTLGS and LQTPPVKPNLKSARSPRPTGKTETNEG. Positions 746-761 are enriched in polar residues; the sequence is PSLNPLAQSQGLSCTL.

The protein belongs to the DACH/dachshund family.

The protein is SKI/DACH domain-containing protein 1 (SKIDA1) of Homo sapiens (Human).